A 422-amino-acid chain; its full sequence is G-protein coupled receptor 83 (422 aa).

Residues 1–16 (MGRRGALLCLLPLLRA) form the signal peptide. The Extracellular segment spans residues 17 to 70 (AERPEGRADEPGLEAALAGPNASHFFWSNYSFSDWQNFVGRRRYGAESQNPTVK). N-linked (GlcNAc...) asparagine glycans are attached at residues asparagine 37 and asparagine 45. A helical membrane pass occupies residues 71 to 91 (ALLVVAYSFIIVFSLFGNVLV). Topologically, residues 92-106 (CHVIFKNQRMRSATS) are cytoplasmic. A helical transmembrane segment spans residues 107 to 128 (LFIVNLAVADILITLLNTPFTL). At 129–144 (VRFVNSTWVFGKGMCH) the chain is on the extracellular side. A glycan (N-linked (GlcNAc...) asparagine) is linked at asparagine 133. Residues 145–166 (VSRFAQYCSLHVSALTLTAIAV) traverse the membrane as a helical segment. At 167–185 (DRHQVIMHPLKPRISITKG) the chain is on the cytoplasmic side. A helical transmembrane segment spans residues 186–207 (VIYITVIWTMATFFSLPHAICQ). Over 208-237 (KLFTFKYSEDIVRSLCLPDFPEPADLFWKY) the chain is Extracellular. Residues 238 to 259 (LDLATFILLYILPLLIISVAYA) traverse the membrane as a helical segment. The Cytoplasmic segment spans residues 260 to 292 (RVAKKLWLCNTIGDVTTEQYLALRRKKKKTIKM). Residues 293–314 (LMLVVVLFALCWFPLNCYVLLL) form a helical membrane-spanning segment. At 315 to 326 (SSKVIHTNNALY) the chain is on the extracellular side. The chain crosses the membrane as a helical span at residues 327–347 (FAFHWFAMSSTCYNPFIYCWL). Residues 348 to 422 (NENFRIELKA…SSVEPIVAMS (75 aa)) lie on the Cytoplasmic side of the membrane.

This sequence belongs to the G-protein coupled receptor 1 family.

The protein resides in the cell membrane. In terms of biological role, G-protein coupled receptor for PEN, a neuropeptide produced from the precursor protein, proSAAS (encoded by PCSK1N). Acts through a G(i)- and G(q)-alpha-alpha-mediated pathway in response to PEN. Plays a role in food intake and body weight regulation. May contribute to the regulation of anxiety-related behaviors. The polypeptide is G-protein coupled receptor 83 (GPR83) (Canis lupus familiaris (Dog)).